Here is a 349-residue protein sequence, read N- to C-terminus: Isopentenyl-diphosphate delta-isomerase (349 aa).

6 to 7 (RK) is a binding site for substrate. Residues 62–64 (AMT), Ser93, and Asn122 contribute to the FMN site. Gln152 contributes to the substrate binding site. Glu153 serves as a coordination point for Mg(2+). FMN is bound by residues Lys184, Thr214, 258–259 (GG), and 280–281 (AG).

The protein belongs to the IPP isomerase type 2 family. In terms of assembly, homooctamer. Dimer of tetramers. The cofactor is FMN. NADPH serves as cofactor. It depends on Mg(2+) as a cofactor.

Its subcellular location is the cytoplasm. The enzyme catalyses isopentenyl diphosphate = dimethylallyl diphosphate. Its function is as follows. Involved in the biosynthesis of isoprenoids. Catalyzes the 1,3-allylic rearrangement of the homoallylic substrate isopentenyl (IPP) to its allylic isomer, dimethylallyl diphosphate (DMAPP). The chain is Isopentenyl-diphosphate delta-isomerase from Bacillus cereus (strain 03BB102).